Consider the following 198-residue polypeptide: ATP-dependent Clp protease proteolytic subunit (198 aa).

Ser-98 acts as the Nucleophile in catalysis. Residue His-123 is part of the active site.

This sequence belongs to the peptidase S14 family. As to quaternary structure, fourteen ClpP subunits assemble into 2 heptameric rings which stack back to back to give a disk-like structure with a central cavity, resembling the structure of eukaryotic proteasomes.

The protein localises to the cytoplasm. It carries out the reaction Hydrolysis of proteins to small peptides in the presence of ATP and magnesium. alpha-casein is the usual test substrate. In the absence of ATP, only oligopeptides shorter than five residues are hydrolyzed (such as succinyl-Leu-Tyr-|-NHMec, and Leu-Tyr-Leu-|-Tyr-Trp, in which cleavage of the -Tyr-|-Leu- and -Tyr-|-Trp bonds also occurs).. Cleaves peptides in various proteins in a process that requires ATP hydrolysis. Has a chymotrypsin-like activity. Plays a major role in the degradation of misfolded proteins. The polypeptide is ATP-dependent Clp protease proteolytic subunit (Halothermothrix orenii (strain H 168 / OCM 544 / DSM 9562)).